We begin with the raw amino-acid sequence, 187 residues long: Ribosome-recycling factor (187 aa).

It belongs to the RRF family.

It is found in the cytoplasm. In terms of biological role, responsible for the release of ribosomes from messenger RNA at the termination of protein biosynthesis. May increase the efficiency of translation by recycling ribosomes from one round of translation to another. The sequence is that of Ribosome-recycling factor from Flavobacterium psychrophilum (strain ATCC 49511 / DSM 21280 / CIP 103535 / JIP02/86).